The primary structure comprises 355 residues: MTELKNDTYLRALLKQPVDYTPVWMMRQAGRYLPEYREVRKNAGDFMSVCKNAELACEVTIQPLRRFPLDAAILFSDILTIPDAMGLGLYFETGEGPKFERPITCKADVDKIAVPDPEDELGYVMNAVRTIRKELKGEVPLIGFSGSPWTLATYMIEGGSSKAFTKIKKMMFAEPQTLHLLLDKLADSVISYLNAQIAAGAQSVMVFDTWGGVLSPRDYNEFSLQYMAKIVDGLTRHNEGRQVPVTLFTKNGGMWLESIAATGCDAVGLDWTIDIENAKARVGDKVALQGNMDPSMLYAPLPRIEQEVSKILSGFGEGGTGHVFNLGHGIHPDVNPDHAGHFIESVHRLSKPYHK.

Substrate contacts are provided by residues 27–31, aspartate 77, tyrosine 154, threonine 209, and histidine 328; that span reads RQAGR.

This sequence belongs to the uroporphyrinogen decarboxylase family. Homodimer.

The protein resides in the cytoplasm. The catalysed reaction is uroporphyrinogen III + 4 H(+) = coproporphyrinogen III + 4 CO2. It participates in porphyrin-containing compound metabolism; protoporphyrin-IX biosynthesis; coproporphyrinogen-III from 5-aminolevulinate: step 4/4. In terms of biological role, catalyzes the decarboxylation of four acetate groups of uroporphyrinogen-III to yield coproporphyrinogen-III. The sequence is that of Uroporphyrinogen decarboxylase from Colwellia psychrerythraea (strain 34H / ATCC BAA-681) (Vibrio psychroerythus).